Here is a 67-residue protein sequence, read N- to C-terminus: Beta-defensin 110 (67 aa).

The N-terminal stretch at 1-19 is a signal peptide; the sequence is MKIQLFFFILLFWVTILPA. 3 disulfide bridges follow: C35–C63, C42–C56, and C46–C64.

It belongs to the beta-defensin family.

The protein localises to the secreted. Its function is as follows. Has antibacterial activity. This Pan troglodytes (Chimpanzee) protein is Beta-defensin 110 (DEFB110).